Here is a 579-residue protein sequence, read N- to C-terminus: uncharacterized protein (579 aa).

One can recognise a GGDEF domain in the interval 449–577 (QKGVFILVDI…GKNRLMIHDS (129 aa)).

This is an uncharacterized protein from Bacillus subtilis (strain 168).